A 164-amino-acid chain; its full sequence is V-type proton ATPase subunit c3 (164 aa).

At 1–11 (MSTFSGDETAP) the chain is on the lumenal side. A helical transmembrane segment spans residues 12–32 (FFGFLGAAAALVFSCMGAAYG). Residues 33–54 (TAKSGVGVASMGVMRPELVMKS) lie on the Cytoplasmic side of the membrane. The helical transmembrane segment at 55-75 (IVPVVMAGVLGIYGLIIAVII) threads the bilayer. The Lumenal segment spans residues 76–94 (STGINPKAKSYYLFDGYAH). The helical transmembrane segment at 95–116 (LSSGLACGLAGLSAGMAIGIVG) threads the bilayer. Residues 117 to 128 (DAGVRANAQQPK) lie on the Cytoplasmic side of the membrane. Residues 129–154 (LFVGMILILIFAEALALYGLIVGIIL) traverse the membrane as a helical segment. The Lumenal portion of the chain corresponds to 155-164 (SSRAGQSRAE).

This sequence belongs to the V-ATPase proteolipid subunit family. As to quaternary structure, V-ATPase is a heteromultimeric enzyme composed of a peripheral catalytic V1 complex (components A to H) attached to an integral membrane V0 proton pore complex (components: a, c, c'', d and e). The proteolipid components c and c'' are present as a hexameric ring that forms the proton-conducting pore. In terms of tissue distribution, expressed in leaf, root, flower and silique.

It is found in the vacuole membrane. In terms of biological role, proton-conducting pore forming subunit of the membrane integral V0 complex of vacuolar ATPase. V-ATPase is responsible for acidifying a variety of intracellular compartments in eukaryotic cells. This chain is V-type proton ATPase subunit c3 (VHA-c3), found in Arabidopsis thaliana (Mouse-ear cress).